Here is a 99-residue protein sequence, read N- to C-terminus: Small ribosomal subunit protein uS19 (99 aa).

The disordered stretch occupies residues 76–99 (PTRSFRGHAGGGKAEKGGSAPRKK).

The protein belongs to the universal ribosomal protein uS19 family.

Protein S19 forms a complex with S13 that binds strongly to the 16S ribosomal RNA. This chain is Small ribosomal subunit protein uS19, found in Pelodictyon phaeoclathratiforme (strain DSM 5477 / BU-1).